The following is a 123-amino-acid chain: MAKIKARDLRGKKKEELLKQLEDLKVELSQLRVAKVTGGAASKLSKIRVVRKSIARVLTVINQTQKENLRKFYKGKKYKPLDLRPKKTRAMRRRLNKHEENLKTKKQQRKERLYPLRKFAVKA.

At Lys-19 the chain carries N6-acetyllysine. Lys-25 is covalently cross-linked (Glycyl lysine isopeptide (Lys-Gly) (interchain with G-Cter in SUMO2)). Ser-29 is subject to Phosphoserine. Position 43 is an N6-acetyllysine (Lys-43).

It belongs to the universal ribosomal protein uL29 family. Component of the large ribosomal subunit.

The protein localises to the cytoplasm. Functionally, component of the large ribosomal subunit. The ribosome is a large ribonucleoprotein complex responsible for the synthesis of proteins in the cell. The sequence is that of Large ribosomal subunit protein uL29 (RPL35) from Sus scrofa (Pig).